The primary structure comprises 210 residues: Large ribosomal subunit protein uL3 (210 aa).

Belongs to the universal ribosomal protein uL3 family. Part of the 50S ribosomal subunit. Forms a cluster with proteins L14 and L19.

In terms of biological role, one of the primary rRNA binding proteins, it binds directly near the 3'-end of the 23S rRNA, where it nucleates assembly of the 50S subunit. The sequence is that of Large ribosomal subunit protein uL3 from Caldicellulosiruptor bescii (strain ATCC BAA-1888 / DSM 6725 / KCTC 15123 / Z-1320) (Anaerocellum thermophilum).